The chain runs to 156 residues: ATP synthase subunit b (156 aa).

Residues 12–32 (VAFFIFVLFCMKFVWPPVIAA) traverse the membrane as a helical segment.

It belongs to the ATPase B chain family. In terms of assembly, F-type ATPases have 2 components, F(1) - the catalytic core - and F(0) - the membrane proton channel. F(1) has five subunits: alpha(3), beta(3), gamma(1), delta(1), epsilon(1). F(0) has three main subunits: a(1), b(2) and c(10-14). The alpha and beta chains form an alternating ring which encloses part of the gamma chain. F(1) is attached to F(0) by a central stalk formed by the gamma and epsilon chains, while a peripheral stalk is formed by the delta and b chains.

It is found in the cell inner membrane. Its function is as follows. F(1)F(0) ATP synthase produces ATP from ADP in the presence of a proton or sodium gradient. F-type ATPases consist of two structural domains, F(1) containing the extramembraneous catalytic core and F(0) containing the membrane proton channel, linked together by a central stalk and a peripheral stalk. During catalysis, ATP synthesis in the catalytic domain of F(1) is coupled via a rotary mechanism of the central stalk subunits to proton translocation. In terms of biological role, component of the F(0) channel, it forms part of the peripheral stalk, linking F(1) to F(0). The protein is ATP synthase subunit b of Pseudomonas aeruginosa (strain UCBPP-PA14).